A 308-amino-acid polypeptide reads, in one-letter code: Methionyl-tRNA formyltransferase (308 aa).

Residue 109 to 112 coordinates (6S)-5,6,7,8-tetrahydrofolate; that stretch reads SLLP.

This sequence belongs to the Fmt family.

The enzyme catalyses L-methionyl-tRNA(fMet) + (6R)-10-formyltetrahydrofolate = N-formyl-L-methionyl-tRNA(fMet) + (6S)-5,6,7,8-tetrahydrofolate + H(+). Functionally, attaches a formyl group to the free amino group of methionyl-tRNA(fMet). The formyl group appears to play a dual role in the initiator identity of N-formylmethionyl-tRNA by promoting its recognition by IF2 and preventing the misappropriation of this tRNA by the elongation apparatus. In Salinispora arenicola (strain CNS-205), this protein is Methionyl-tRNA formyltransferase.